A 387-amino-acid polypeptide reads, in one-letter code: 3-ketoacyl-CoA thiolase (387 aa).

C91 serves as the catalytic Acyl-thioester intermediate. Catalysis depends on proton acceptor residues H343 and C373.

The protein belongs to the thiolase-like superfamily. Thiolase family. Heterotetramer of two alpha chains (FadB) and two beta chains (FadA).

The protein resides in the cytoplasm. It catalyses the reaction an acyl-CoA + acetyl-CoA = a 3-oxoacyl-CoA + CoA. The protein operates within lipid metabolism; fatty acid beta-oxidation. Catalyzes the final step of fatty acid oxidation in which acetyl-CoA is released and the CoA ester of a fatty acid two carbons shorter is formed. The polypeptide is 3-ketoacyl-CoA thiolase (Shewanella sp. (strain ANA-3)).